The chain runs to 312 residues: Homoserine O-acetyltransferase (312 aa).

The active-site Acyl-thioester intermediate is Cys142. Substrate is bound by residues Lys163 and Ser194. Residue His237 is the Proton acceptor of the active site. Glu239 is an active-site residue. Residue Arg251 coordinates substrate.

This sequence belongs to the MetA family.

The protein resides in the cytoplasm. The enzyme catalyses L-homoserine + acetyl-CoA = O-acetyl-L-homoserine + CoA. Its pathway is amino-acid biosynthesis; L-methionine biosynthesis via de novo pathway; O-acetyl-L-homoserine from L-homoserine: step 1/1. In terms of biological role, transfers an acetyl group from acetyl-CoA to L-homoserine, forming acetyl-L-homoserine. This Catenibacterium mitsuokai (strain DSM 15897 / JCM 10609 / CCUG 48821 A / CIP 106738 / RCA14-39) protein is Homoserine O-acetyltransferase.